Here is a 505-residue protein sequence, read N- to C-terminus: 2,3-bisphosphoglycerate-independent phosphoglycerate mutase (505 aa).

Aspartate 11 and serine 61 together coordinate Mn(2+). Serine 61 serves as the catalytic Phosphoserine intermediate. Substrate is bound by residues histidine 122, 152 to 153 (RD), arginine 184, arginine 190, 258 to 261 (RPDR), and lysine 331. Residues aspartate 396, histidine 400, aspartate 437, histidine 438, and histidine 455 each contribute to the Mn(2+) site.

The protein belongs to the BPG-independent phosphoglycerate mutase family. As to quaternary structure, monomer. The cofactor is Mn(2+).

It catalyses the reaction (2R)-2-phosphoglycerate = (2R)-3-phosphoglycerate. It participates in carbohydrate degradation; glycolysis; pyruvate from D-glyceraldehyde 3-phosphate: step 3/5. Catalyzes the interconversion of 2-phosphoglycerate and 3-phosphoglycerate. This is 2,3-bisphosphoglycerate-independent phosphoglycerate mutase from Mesomycoplasma hyopneumoniae (strain J / ATCC 25934 / NCTC 10110) (Mycoplasma hyopneumoniae).